The following is a 1203-amino-acid chain: Delphilin (1203 aa).

The PDZ 1 domain maps to Met-1–Gly-79. The S-palmitoyl cysteine moiety is linked to residue Ala-3. The tract at residues Gly-215–Arg-270 is disordered. Positions Leu-231–Pro-241 are enriched in low complexity. The PDZ 2 domain occupies Thr-268–Pro-345. Residue Ser-303 is modified to Phosphoserine. Disordered stretches follow at residues Glu-466–Pro-541, Ile-563–Thr-586, Leu-611–Arg-656, and Ser-710–Ser-821. The span at Arg-500–Ser-509 shows a compositional bias: polar residues. Phosphoserine is present on residues Ser-572, Ser-613, Ser-644, and Ser-647. The segment covering Leu-611–Leu-625 has biased composition (low complexity). A compositionally biased stretch (low complexity) spans Glu-715–His-740. Pro residues predominate over residues Ile-741 to Phe-756. Residues Gln-774–Asn-784 are compositionally biased toward polar residues. Pro residues predominate over residues Pro-786–Pro-803. One can recognise an FH2 domain in the interval His-812–Trp-1203.

As to quaternary structure, interacts with C-terminus of the glutamate receptor GRID2 via PDZ domain. Isoform 2 also interacts with Profilin-2/PFN2 and with the monocarboxylate transporter SLC16A7 via PDZ domain. The interaction of isoform 2 with GRID2 is dependent on GRID2 phosphorylation by PKA. Post-translationally, isoform 2 is palmitoylated. Palmitoylation of isoform 2 is necessary for the enhanced cell surface expression of GRID2, and is also responsible for the accumulation of isoform 2 within dendritic spines. Isoform 1 and isoform 2 are differentially localized, probably modulating GRID2 signaling in neurons. Isoform 1 is expressed in the cerebellum, but not in the cerebral cortex. Isoform 2 is expressed in the cell body of purkinge cells of the cerebellum and weakly expressed in the cerebrum and the brainstem as well as various nuclei of the thalamus. Isoform 2 is highly expressed in the cerebral cortex than in the cerebellum. Isoform 3 is expressed in the cerebellum and cerebrum.

The protein localises to the postsynaptic cell membrane. Its subcellular location is the cell projection. It is found in the dendritic spine. The protein resides in the synapse. It localises to the cell membrane. In terms of biological role, postsynaptic scaffolding protein at the Purkinje cell synapse, where it may serve to link GRID2 with actin cytoskeleton and various signaling molecules. The chain is Delphilin (Grid2ip) from Mus musculus (Mouse).